The primary structure comprises 553 residues: MAFSELLDLVGGLGRFQVLQTMALMVSIMWLCTQSMLENFSAAVPSHRCWAPLLDNSTAQASILGSLSPEALLAISIPPGPNQRPHQCRRFRQPQWQLLDPNATATSWSEADTEPCVDGWVYDRSIFTSTIVAKWNLVCDSHALKPMAQSIYLAGILVGAAACGPASDRFGRRLVLTWSYLQMAVMGTAAAFAPAFPVYCLFRFLLAFAVAGVMMNTGTLLMEWTAARARPLVMTLNSLGFSFGHGLTAAVAYGVRDWTLLQLVVSVPFFLCFLYSWWLAESARWLLTTGRLDWGLQELWRVAAINGKGAVQDTLTPEVLLSAMREELSMGQPPASLGTLLRMPGLRFRTCISTLCWFAFGFTFFGLALDLQALGSNIFLLQMFIGVVDIPAKMGALLLLSHLGRRPTLAASLLLAGLCILANTLVPHEMGALRSALAVLGLGGVGAAFTCITIYSSELFPTVLRMTAVGLGQMAARGGAILGPLVRLLGVHGPWLPLLVYGTVPVLSGLAALLLPETQSLPLPDTIQDVQNQAVKKATHGTLGNSVLKSTQF.

A helical membrane pass occupies residues Leu-9 to Met-29. N-linked (GlcNAc...) asparagine glycans are attached at residues Asn-56 and Asn-102. 11 helical membrane passes run Pro-146–Ala-166, Leu-174–Pro-194, Ala-195–Met-215, Leu-232–Ala-252, Leu-260–Ala-280, Cys-351–Leu-371, Ile-378–Leu-398, Pro-407–Pro-427, Ser-435–Tyr-455, Met-466–Val-486, and Trp-495–Leu-515. Residue Thr-542 is modified to Phosphothreonine.

It belongs to the major facilitator (TC 2.A.1) superfamily. Organic cation transporter (TC 2.A.1.19) family. Interacts with PDZK1. N-glycosylated. As to expression, detected in kidney (at protein level). Detected in fetal and adult kidney. Detected in epithelial cells of proximal tubules in renal cortex.

The protein resides in the apical cell membrane. The catalysed reaction is urate(out) + (S)-lactate(in) = urate(in) + (S)-lactate(out). It catalyses the reaction nicotinate(in) + urate(out) = nicotinate(out) + urate(in). The enzyme catalyses urate(out) + n chloride(in) = urate(in) + n chloride(out). It carries out the reaction orotate(out) + nicotinate(in) = orotate(in) + nicotinate(out). In terms of biological role, electroneutral antiporter that translocates urate across the apical membrane of proximal tubular cells in exchange for monovalent organic or inorganic anions. Involved in renal reabsorption of urate and helps maintaining blood levels of uric acid. Mediates urate uptake by an exchange with organic anions such as (S)-lactate and nicotinate, and inorganic anion Cl(-). Other inorganic anions such as Br(-), I(-) and NO3(-) may also act as counteranions that exchange for urate. Also mediates orotate tubular uptake coupled with nicotinate efflux and to a lesser extent with lactate efflux, therefore displaying a potential role in orotate renal reabsorption. Orotate transport is Cl(-)-dependent. In Homo sapiens (Human), this protein is Solute carrier family 22 member 12.